Consider the following 197-residue polypeptide: MSFSRLFRLLKPTLLCGTLAVPGLAGTMCASRDDWRCARSMHEFSAKDIDGHMVNLDKYRGYVCIVTNVASQUGKTEVNYTQLVDLHARYAECGLRILAFPCNQFGRQEPGSDAEIKEFAAGYNVKFDMFSKICVNGDDAHPLWKWMKVQPKGRGMLGNAIKWNFTKFLIDKNGCVVKRYGPMEEPQVIEKDLPCYL.

Ser-40 carries the post-translational modification Phosphoserine. Sec-73 is a catalytic residue. Residue Sec-73 is a non-standard amino acid, selenocysteine.

Belongs to the glutathione peroxidase family. In terms of assembly, monomer. Has a tendency to form higher mass oligomers. Interacts with FUNDC1; this interaction promotes GPX4 recruitment into mitochondria through TOM/TIM complex where it is degraded by mitophagy.

It is found in the mitochondrion. The protein resides in the cytoplasm. It carries out the reaction a hydroperoxy polyunsaturated fatty acid + 2 glutathione = a hydroxy polyunsaturated fatty acid + glutathione disulfide + H2O. It catalyses the reaction 2 glutathione + H2O2 = glutathione disulfide + 2 H2O. The catalysed reaction is tert-butyl hydroperoxide + 2 glutathione = tert-butanol + glutathione disulfide + H2O. The enzyme catalyses cumene hydroperoxide + 2 glutathione = 2-phenylpropan-2-ol + glutathione disulfide + H2O. It carries out the reaction (9S)-hydroperoxy-(10E,12Z)-octadecadienoate + 2 glutathione = (9S)-hydroxy-(10E,12Z)-octadecadienoate + glutathione disulfide + H2O. It catalyses the reaction (13S)-hydroperoxy-(9Z,11E)-octadecadienoate + 2 glutathione = (13S)-hydroxy-(9Z,11E)-octadecadienoate + glutathione disulfide + H2O. The catalysed reaction is (5S)-hydroperoxy-(6E,8Z,11Z,14Z)-eicosatetraenoate + 2 glutathione = (5S)-hydroxy-(6E,8Z,11Z,14Z)-eicosatetraenoate + glutathione disulfide + H2O. The enzyme catalyses (12R)-hydroperoxy-(5Z,8Z,10E,14Z)-eicosatetraenoate + 2 glutathione = (12R)-hydroxy-(5Z,8Z,10E,14Z)-eicosatetraenoate + glutathione disulfide + H2O. It carries out the reaction (12S)-hydroperoxy-(5Z,8Z,10E,14Z)-eicosatetraenoate + 2 glutathione = (12S)-hydroxy-(5Z,8Z,10E,14Z)-eicosatetraenoate + glutathione disulfide + H2O. It catalyses the reaction (15S)-hydroperoxy-(5Z,8Z,11Z,13E)-eicosatetraenoate + 2 glutathione = (15S)-hydroxy-(5Z,8Z,11Z,13E)-eicosatetraenoate + glutathione disulfide + H2O. The catalysed reaction is (5S)-hydroperoxy-(6E,8Z,11Z,14Z,17Z)-eicosapentaenoate + 2 glutathione = (5S)-hydroxy-(6E,8Z,11Z,14Z,17Z)-eicosapentaenoate + glutathione disulfide + H2O. The enzyme catalyses (12S)-hydroperoxy-(5Z,8Z,10E,14Z,17Z)-eicosapentaenoate + 2 glutathione = (12S)-hydroxy-(5Z,8Z,10E,14Z,17Z)-eicosapentaenoate + glutathione disulfide + H2O. It carries out the reaction (15S)-hydroperoxy-(5Z,8Z,11Z,13E,17Z)-eicosapentaenoate + 2 glutathione = (15S)-hydroxy-(5Z,8Z,11Z,13E,17Z)-eicosapentaenoate + glutathione disulfide + H2O. It catalyses the reaction (15S)-hydroperoxy-(11Z,13E)-eicosadienoate + 2 glutathione = (15S)-hydroxy-(11Z,13E)-eicosadienoate + glutathione disulfide + H2O. The catalysed reaction is (17S)-hydroperoxy-(4Z,7Z,10Z,13Z,15E,19Z)-docosahexaenoate + 2 glutathione = (17S)-hydroxy-(4Z,7Z,10Z,13Z,15E,19Z)-docosahexaenoate + glutathione disulfide + H2O. The enzyme catalyses a hydroperoxy-1,2-diacyl-glycero-3-phosphocholine + 2 glutathione = a hydroxy-1,2-diacyl-glycero-3-phosphocholine + glutathione disulfide + H2O. Essential antioxidant peroxidase that directly reduces phospholipid hydroperoxide even if they are incorporated in membranes and lipoproteins. Can also reduce fatty acid hydroperoxide, cholesterol hydroperoxide and thymine hydroperoxide. Plays a key role in protecting cells from oxidative damage by preventing membrane lipid peroxidation. Required to prevent cells from ferroptosis, a non-apoptotic cell death resulting from an iron-dependent accumulation of lipid reactive oxygen species. The presence of selenocysteine (Sec) versus Cys at the active site is essential for life: it provides resistance to overoxidation and prevents cells against ferroptosis. The presence of Sec at the active site is also essential for the survival of a specific type of parvalbumin-positive interneurons, thereby preventing against fatal epileptic seizures. May be required to protect cells from the toxicity of ingested lipid hydroperoxides. Required for normal sperm development and male fertility. Essential for maturation and survival of photoreceptor cells. Plays a role in a primary T-cell response to viral and parasitic infection by protecting T-cells from ferroptosis and by supporting T-cell expansion. Plays a role of glutathione peroxidase in platelets in the arachidonic acid metabolism. Reduces hydroperoxy ester lipids formed by a 15-lipoxygenase that may play a role as down-regulator of the cellular 15-lipoxygenase pathway. Can also reduce small soluble hydroperoxides such as H2O2, cumene hydroperoxide and tert-butyl hydroperoxide. This is Phospholipid hydroperoxide glutathione peroxidase from Sus scrofa (Pig).